Here is a 41-residue protein sequence, read N- to C-terminus: Photosystem I reaction center subunit IX (41 aa).

A helical membrane pass occupies residues 7-27 (YLSTVPVVFAIWLTFTAGLII).

This sequence belongs to the PsaJ family.

The protein resides in the plastid. The protein localises to the chloroplast thylakoid membrane. May help in the organization of the PsaE and PsaF subunits. The chain is Photosystem I reaction center subunit IX from Bigelowiella natans (Pedinomonas minutissima).